The primary structure comprises 488 residues: Ribulose bisphosphate carboxylase large chain (488 aa).

2 residues coordinate substrate: N127 and T177. K179 acts as the Proton acceptor in catalysis. Residue K181 coordinates substrate. Residues K205, D207, and E208 each contribute to the Mg(2+) site. K205 carries the N6-carboxylysine modification. The Proton acceptor role is filled by H297. Residues R298, H330, and S382 each coordinate substrate.

The protein belongs to the RuBisCO large chain family. Type I subfamily. As to quaternary structure, heterohexadecamer of 8 large chains and 8 small chains. It depends on Mg(2+) as a cofactor.

Its subcellular location is the plastid. The protein resides in the chloroplast. It catalyses the reaction 2 (2R)-3-phosphoglycerate + 2 H(+) = D-ribulose 1,5-bisphosphate + CO2 + H2O. It carries out the reaction D-ribulose 1,5-bisphosphate + O2 = 2-phosphoglycolate + (2R)-3-phosphoglycerate + 2 H(+). In terms of biological role, ruBisCO catalyzes two reactions: the carboxylation of D-ribulose 1,5-bisphosphate, the primary event in carbon dioxide fixation, as well as the oxidative fragmentation of the pentose substrate in the photorespiration process. Both reactions occur simultaneously and in competition at the same active site. This is Ribulose bisphosphate carboxylase large chain from Pyropia yezoensis (Susabi-nori).